The sequence spans 1418 residues: Chromatin remodeling factor mit1 (1418 aa).

A compositionally biased stretch (low complexity) spans 135 to 148; the sequence is DETASDSATSSSSD. The segment at 135 to 156 is disordered; it reads DETASDSATSSSSDTNKKVNRK. The PHD-type zinc-finger motif lies at 212–271; sequence VCVCVKCHGREHRSSGKNFVYCDHCSNVYHYDCSPLPSLNKETRNYSQQNGFICPLCSKN. The RING-type; atypical zinc finger occupies 215-269; sequence CVKCHGREHRSSGKNFVYCDHCSNVYHYDCSPLPSLNKETRNYSQQNGFICPLCS. Positions 568–738 constitute a Helicase ATP-binding domain; sequence YLRWYTHHPC…FNLLQFLNPM (171 aa). ATP is bound at residue 581–588; it reads DEMGLGKT. The Helicase C-terminal domain maps to 875 to 1034; sequence ILRLLVPKLI…QNHNSEKDLE (160 aa).

This sequence belongs to the SNF2/RAD54 helicase family. As to quaternary structure, interacts with clr3.

It is found in the nucleus. The protein resides in the chromosome. It localises to the centromere. Its subcellular location is the telomere. Required for proper positioning of nucleosomes at heterochromatic loci and for transcriptional gene silencing (TGS) function of the Snf2/Hdac-containing repressor complex (SHREC). This is Chromatin remodeling factor mit1 (mit1) from Schizosaccharomyces pombe (strain 972 / ATCC 24843) (Fission yeast).